A 569-amino-acid polypeptide reads, in one-letter code: MTTKTSNETYGAGTVVDSEFSPLPAECERILRIFAARTPGFTKDEALLSGVNFHGDDLPCIPGPIKSQAVTAVLHAMVGIVGLEILHLRGVTTDNQIDIDVNHAGLYPATAALVDIDGVTGPEVIKLPTVPQWDKDRASNSPLVYRATAIYETADSGVWFQLHGSLDSWKVLALLGIGKDLDSEIRTNDAAYELIQERVRKYRAREIEQLVVEKGLSGSIVYSPEEWRQTEMGRSLSRHPLVNYKQKSHCATLAPASFPVLEDKRPLAGIKVVELTRIIAGAAAGAALASLGAEVIRVNSSKLKDYTPAQPSSLMAGKKTIDLDLEDPADHKKLMQLFEQADVILQGYRLGSLARRGFGLEAALELANKRGRGVVYVDENCYGPDGYYAERPGWQQVADAAAGSSYVMGQSFGFPKGQGVLPSLPISDMSTGILTALTIMCGIRDRAKFGGSYHGHASLTAYNMATLDSEVRLYQREVVQKISDKYEFPTWSSDVHVAPLYYSILDAWGKKSELIKDEKHYIHFSDSVFGSDLRVLGPVVRYDKEEYSPKWNSPPVPFCHHEFTMFSNQ.

This sequence belongs to the CoA-transferase III family.

Acyl-CoA transferase; part of the Fusarium detoxification of benzoxazolinone cluster 2 (FDB2) involved in the degradation of benzoxazolinones produced by the host plant. Maize, wheat, and rye produce the 2 benzoxazinone phytoanticipins 2,4-dihy-droxy-7-methoxy-1,4-benzoxazin-3-one (DIMBOA) and 2,4-dihydroxy-1,4-benzoxazin-3-one (DIBOA) that, due to their inherent instability once released, spontaneously degrade to the more stable corresponding benzoxazolinones, 6-methoxy-2-benzoxazolinone (MBOA) and 2-benzoxazolinone (BOA), respectively. The first step in the detoxification of benzoxazolinones involves the hydrolysis of the cyclic ester bond of benzoxazolinones by the FDB1 cluster gamma-lactamase MBL1 to aminophenols. MBL1 is able to convert BOA into 2-aminophenol (2-AP), as well as MBOA into 5-methoxy-2-aminophenol (2-AMP). The FDB2 cluster N-malonyltransferase FDB2/NAT1 then metabolizes aminophenols via N-malonylation to non-toxic malonamic acids. FDB2/NAT1 converts 2-AP into N-(2-hydroxyphenyl) malonamic acid (HPMA) and 2-AMP into N-(2-hydroxy-4-methoxyphenyl) malonamic acid (HMPMA). The duplicated dienlactone hydrolases DLH1 and DLH2 may provide redundant function for hydrolyzing the lactone moiety in the BOA molecule. The roles of the amidases an other enzymes encoded by the 2 FDB clusters have not been identified so far. The polypeptide is Acyl-CoA transferase FVEG_12629 (Gibberella moniliformis (strain M3125 / FGSC 7600) (Maize ear and stalk rot fungus)).